A 111-amino-acid chain; its full sequence is Magnetosome protein MamF (111 aa).

Topologically, residues 1–17 (MAETILIETKTAGGNCR) are cytoplasmic. Residues 18–38 (SYLMAGASYLGILCFVPLLMS) traverse the membrane as a helical segment. The Lumenal segment spans residues 39–50 (RDDEYVYFHAKQ). A helical transmembrane segment spans residues 51–71 (GLVLWMWSILAMFALHLPGIG). Position 72 (Lys72) is a topological domain, cytoplasmic. A helical transmembrane segment spans residues 73–93 (WLFGFSSMGVLMLSVVGLVSV). Residues 94-111 (ALRRTWRLPLISHVVALI) are Lumenal-facing.

It belongs to the magnetosome MamF/MmsF protein family. In terms of assembly, may form homooligomers. In terms of processing, subject to cleavage or degradation; identified by N-terminal sequencing of proteins that are about 103, 92 and 15 kDa in size.

It is found in the magnetosome membrane. Plays a role in regulating magnetite crystal size; partially redundant function with MmsF. The chain is Magnetosome protein MamF from Magnetospirillum gryphiswaldense (strain DSM 6361 / JCM 21280 / NBRC 15271 / MSR-1).